Consider the following 228-residue polypeptide: MGAWAMLYGVSMLCVLDLGQPSVVEEPGCGPGKVQNGSGNNTRCCSLYAPGKEDCPKERCICVTPEYHCGDPQCKICKHYPCQPGQRVESQGDIVFGFRCVACAMGTFSAGRDGHCRLWTNCSQFGFLTMFPGNKTHNAVCIPEPLPTEQYGHLTVIFLVMAACIFFLTTVQLGLHIWQLRRQHMCPRETQPFAEVQLSAEDACSFQFPEEERGEQTEEKCHLGGRWP.

Residues 1–19 (MGAWAMLYGVSMLCVLDLG) form the signal peptide. Residues 20 to 153 (QPSVVEEPGC…EPLPTEQYGH (134 aa)) are Extracellular-facing. TNFR-Cys repeat units follow at residues 28 to 61 (GCGP…ERCI), 62 to 101 (CVTP…FRCV), and 102 to 142 (ACAM…AVCI). 5 disulfide bridges follow: cysteine 29–cysteine 44, cysteine 62–cysteine 74, cysteine 69–cysteine 82, cysteine 103–cysteine 122, and cysteine 116–cysteine 141. N-linked (GlcNAc...) asparagine glycosylation is found at asparagine 36 and asparagine 40. 2 N-linked (GlcNAc...) asparagine glycosylation sites follow: asparagine 121 and asparagine 134. The chain crosses the membrane as a helical span at residues 154-174 (LTVIFLVMAACIFFLTTVQLG). At 175–228 (LHIWQLRRQHMCPRETQPFAEVQLSAEDACSFQFPEEERGEQTEEKCHLGGRWP) the chain is on the cytoplasmic side.

As to quaternary structure, binds to TRAF1, TRAF2, and TRAF3, but not TRAF5 and TRAF6. Binds through its C-terminus to SIVA1/SIVA. Preferentially expressed in activated T lymphocytes.

The protein resides in the cell membrane. It localises to the secreted. Its function is as follows. Receptor for TNFSF18. Seems to be involved in interactions between activated T-lymphocytes and endothelial cells and in the regulation of T-cell receptor-mediated cell death. Mediated NF-kappa-B activation via the TRAF2/NIK pathway. The sequence is that of Tumor necrosis factor receptor superfamily member 18 (Tnfrsf18) from Mus musculus (Mouse).